Consider the following 288-residue polypeptide: Quinate/shikimate dehydrogenase (288 aa).

2 residues coordinate substrate: Lys71 and Asp107. Residues 132–135 (AGGA), 155–158 (NRRD), Lys205, 232–235 (CVYN), and Gly255 contribute to the NAD(+) site.

The protein belongs to the shikimate dehydrogenase family. As to quaternary structure, homodimer.

It catalyses the reaction L-quinate + NAD(+) = 3-dehydroquinate + NADH + H(+). The enzyme catalyses L-quinate + NADP(+) = 3-dehydroquinate + NADPH + H(+). It carries out the reaction shikimate + NADP(+) = 3-dehydroshikimate + NADPH + H(+). The catalysed reaction is shikimate + NAD(+) = 3-dehydroshikimate + NADH + H(+). Its pathway is metabolic intermediate biosynthesis; chorismate biosynthesis; chorismate from D-erythrose 4-phosphate and phosphoenolpyruvate: step 4/7. In terms of biological role, the actual biological function of YdiB remains unclear, nor is it known whether 3-dehydroshikimate or quinate represents the natural substrate. Catalyzes the reversible NAD-dependent reduction of both 3-dehydroshikimate (DHSA) and 3-dehydroquinate to yield shikimate (SA) and quinate, respectively. It can use both NAD or NADP for catalysis, however it has higher catalytic efficiency with NAD. In Escherichia coli O1:K1 / APEC, this protein is Quinate/shikimate dehydrogenase.